A 296-amino-acid polypeptide reads, in one-letter code: F-box only protein 2 (296 aa).

The segment at 1-41 (MDGDGDPESVGQPEEASPEEQPEEASAEEERPEDQQEEEAA) is disordered. Residues 16 to 40 (ASPEEQPEEASAEEERPEDQQEEEA) show a composition bias toward acidic residues. An F-box domain is found at 44–91 (AAYLDELPEPLLLRVLAALPAAELVQACRLVCLRWKELVDGAPLWLLK). An FBA domain is found at 113 to 296 (FYFLSKRRRN…VTNSSVWVEP (184 aa)). A carbohydrate-binding positions include 210–212 (RSD) and 278–279 (YW).

In terms of assembly, component of the SCF(FBXO2) complex consisting of CUL1, RBX1, SKP1 and FBXO2. Predominantly detected as heterodimer with SKP1; the heterodimer with SKP1 is not part of the SCF(FBXO2) complex.

Its subcellular location is the cytoplasm. The protein localises to the microsome membrane. It functions in the pathway protein modification; protein ubiquitination. In terms of biological role, substrate recognition component of a SCF (SKP1-CUL1-F-box protein) E3 ubiquitin-protein ligase complex that mediates the ubiquitination and subsequent proteasomal degradation of target proteins. Involved in the endoplasmic reticulum-associated degradation pathway (ERAD) for misfolded lumenal proteins by recognizing and binding sugar chains on unfolded glycoproteins that are retrotranslocated into the cytosol and promoting their ubiquitination and subsequent degradation. Prevents formation of cytosolic aggregates of unfolded glycoproteins that have been retrotranslocated into the cytosol. Able to recognize and bind denatured glycoproteins, preferentially those of the high-mannose type. The polypeptide is F-box only protein 2 (FBXO2) (Homo sapiens (Human)).